The sequence spans 551 residues: MPSARLQQQFIRLWQCCEGKSQDTTLNELAALLSCSRRHMRTLLNTMQDRGWLTWEAEVGRGKRSRLTFLYTGLALQQQRAEDLLEQDRIDQLVQLVGDKATVRQMLVSHLGRSFRQGRHILRVLYYRPLRNLLPGSALRRSETHIARQIFSSLTRINEENGELEADIAHHWQQISPLHWRFFLRPGVHFHHGRELEMDDVIASLKRINTLPLYSHIADIVSPTPWTLDIHLTQPDRWLPLLLGQVPAMILPREWETLSNFASHPIGTGPYAVIRNSTNQLKIQAFDDFFGYRALIDEVNVWVLPEIADEPAGGLMLKGPQGEEKEIESRLEEGCYYLLFDSRTHRGANQQVRDWVSYVLSPTNLVYFAEEQYQQLWFPAYGLLPRWHHARTIKSEKPAGLESLTLTFYQDHSEHRVIAGIMQQILASHQVTLKIKEIDYDQWHTGEIESDIWLNSANFTLPLDFSVFAHLCEVPLLQHCIPIDWQADAARWRNGEMNLANWCQQLVASKAMVPLLHHWLIIQGQRSMRGLRMNTLGWFDFKSAWFAPPDP.

The region spanning 1–116 (MPSARLQQQF…LVSHLGRSFR (116 aa)) is the HTH marR-type domain. The H-T-H motif DNA-binding region spans 26-49 (LNELAALLSCSRRHMRTLLNTMQD). The interval 163–492 (ELEADIAHHW…IDWQADAARW (330 aa)) is solute-binding.

Its function is as follows. Activates the small RNA gene sgrS under glucose-phosphate stress conditions as well as yfdZ. Represses its own transcription under both stress and non-stress conditions; this repression likely provides one measure of control over sgrR at the level of synthesis. Might act as a sensor of the intracellular accumulation of phosphoglucose by binding these molecules in its C-terminal solute-binding domain. The chain is HTH-type transcriptional regulator SgrR (sgrR) from Escherichia coli (strain K12).